Consider the following 48-residue polypeptide: Large ribosomal subunit protein bL32c (48 aa).

It belongs to the bacterial ribosomal protein bL32 family.

It localises to the plastid. The protein resides in the chloroplast. This is Large ribosomal subunit protein bL32c (rpl32) from Vicia faba (Broad bean).